The sequence spans 212 residues: MYFHALIPFKPVNPKTRLSSVLSQEEREEFARIMLEDVILAVRRTGCSATLLCTSKYECRDALVAIRKEGLNEAINWALPQFHCPALIIMSDLPMVTPGSLQRVISTKADMAIVPGLGGGTNVIFVKKPEKFHVEYYGFSFRRHLQIAEELELTVEIIDSMRMSTDVDEPADLVELMIHGHGNAREWLYEHGFSLSVEDGRVKVHRDGKEVV.

Belongs to the CofC family. Homodimer.

The catalysed reaction is (2S)-2-phospholactate + GTP + H(+) = (2S)-lactyl-2-diphospho-5'-guanosine + diphosphate. Its pathway is cofactor biosynthesis; coenzyme F420 biosynthesis. Functionally, guanylyltransferase that catalyzes the activation of (2S)-2-phospholactate (2-PL) as (2S)-lactyl-2-diphospho-5'-guanosine, via the condensation of 2-PL with GTP. It is involved in the biosynthesis of coenzyme F420, a hydride carrier cofactor. This chain is 2-phospho-L-lactate guanylyltransferase, found in Methanocorpusculum labreanum (strain ATCC 43576 / DSM 4855 / Z).